Consider the following 173-residue polypeptide: Crossover junction endodeoxyribonuclease RuvC (173 aa).

Catalysis depends on residues Asp8, Glu67, and Asp139. Residues Asp8, Glu67, and Asp139 each contribute to the Mg(2+) site.

Belongs to the RuvC family. As to quaternary structure, homodimer which binds Holliday junction (HJ) DNA. The HJ becomes 2-fold symmetrical on binding to RuvC with unstacked arms; it has a different conformation from HJ DNA in complex with RuvA. In the full resolvosome a probable DNA-RuvA(4)-RuvB(12)-RuvC(2) complex forms which resolves the HJ. Requires Mg(2+) as cofactor.

Its subcellular location is the cytoplasm. The enzyme catalyses Endonucleolytic cleavage at a junction such as a reciprocal single-stranded crossover between two homologous DNA duplexes (Holliday junction).. Its function is as follows. The RuvA-RuvB-RuvC complex processes Holliday junction (HJ) DNA during genetic recombination and DNA repair. Endonuclease that resolves HJ intermediates. Cleaves cruciform DNA by making single-stranded nicks across the HJ at symmetrical positions within the homologous arms, yielding a 5'-phosphate and a 3'-hydroxyl group; requires a central core of homology in the junction. The consensus cleavage sequence is 5'-(A/T)TT(C/G)-3'. Cleavage occurs on the 3'-side of the TT dinucleotide at the point of strand exchange. HJ branch migration catalyzed by RuvA-RuvB allows RuvC to scan DNA until it finds its consensus sequence, where it cleaves and resolves the cruciform DNA. This is Crossover junction endodeoxyribonuclease RuvC from Aliivibrio fischeri (strain ATCC 700601 / ES114) (Vibrio fischeri).